The following is a 687-amino-acid chain: Polyphosphate kinase (687 aa).

Residue asparagine 45 participates in ATP binding. Residues arginine 375 and arginine 405 each contribute to the Mg(2+) site. The active-site Phosphohistidine intermediate is the histidine 435. Residues tyrosine 472, arginine 568, and histidine 596 each coordinate ATP.

It belongs to the polyphosphate kinase 1 (PPK1) family. The cofactor is Mg(2+). Post-translationally, an intermediate of this reaction is the autophosphorylated ppk in which a phosphate is covalently linked to a histidine residue through a N-P bond.

It catalyses the reaction [phosphate](n) + ATP = [phosphate](n+1) + ADP. Catalyzes the reversible transfer of the terminal phosphate of ATP to form a long-chain polyphosphate (polyP). The sequence is that of Polyphosphate kinase from Burkholderia vietnamiensis (strain G4 / LMG 22486) (Burkholderia cepacia (strain R1808)).